The chain runs to 221 residues: uncharacterized protein (221 aa).

Low complexity-rich tracts occupy residues 1–27 (MNNN…NNNN) and 140–162 (TTTS…NSSS). 2 disordered regions span residues 1–28 (MNNN…NNNE) and 140–205 (TTTS…NIGG).

This is an uncharacterized protein from Dictyostelium discoideum (Social amoeba).